A 176-amino-acid chain; its full sequence is Lipoprotein signal peptidase (176 aa).

The next 4 helical transmembrane spans lie at L10–L30, V48–F68, Y78–M98, and M102–D122. Active-site residues include D131 and D149. The chain crosses the membrane as a helical span at residues H141–I161.

Belongs to the peptidase A8 family.

It is found in the cell inner membrane. It catalyses the reaction Release of signal peptides from bacterial membrane prolipoproteins. Hydrolyzes -Xaa-Yaa-Zaa-|-(S,diacylglyceryl)Cys-, in which Xaa is hydrophobic (preferably Leu), and Yaa (Ala or Ser) and Zaa (Gly or Ala) have small, neutral side chains.. The protein operates within protein modification; lipoprotein biosynthesis (signal peptide cleavage). This protein specifically catalyzes the removal of signal peptides from prolipoproteins. This chain is Lipoprotein signal peptidase, found in Acinetobacter baumannii (strain SDF).